A 325-amino-acid chain; its full sequence is Glutarate 2-hydroxylase (325 aa).

Fe cation contacts are provided by His160, Asp162, and His292.

This sequence belongs to the glutarate hydroxylase family. Homotetramer. The cofactor is Fe(2+).

The catalysed reaction is glutarate + 2-oxoglutarate + O2 = (S)-2-hydroxyglutarate + succinate + CO2. It participates in amino-acid degradation. Its function is as follows. Acts as an alpha-ketoglutarate-dependent dioxygenase catalyzing hydroxylation of glutarate (GA) to L-2-hydroxyglutarate (L2HG). Functions in a L-lysine degradation pathway that proceeds via cadaverine, glutarate and L-2-hydroxyglutarate. This is Glutarate 2-hydroxylase from Salmonella newport (strain SL254).